The following is a 757-amino-acid chain: Serine/threonine-protein phosphatase with EF-hands 2 (757 aa).

In terms of domain architecture, IQ spans 21–46 (KAAALIQRWYRRYMARLEMRRRCTWN). Residues 128–544 (ATALVEAFRL…PHIVQYQANK (417 aa)) are catalytic. Positions 179, 181, 208, and 240 each coordinate Mn(2+). The active-site Proton donor is His-241. His-292 serves as a coordination point for Mn(2+). The disordered stretch occupies residues 318–349 (CKTRKESENREEQKRKDNQTSSGQKPTPWFLP). Positions 321–335 (RKESENREEQKRKDN) are enriched in basic and acidic residues. His-492 contacts Mn(2+). EF-hand domains follow at residues 572–607 (AHSS…VLHL), 656–691 (RNRS…FSSH), and 696–731 (ITDD…VEQS). Residues Asp-585, Asp-587, Ser-589, Asp-596, Asp-669, Asp-671, Ser-673, Glu-680, Asp-709, Asn-711, Asp-713, His-715, and Glu-720 each coordinate Ca(2+).

This sequence belongs to the PPP phosphatase family. Mn(2+) serves as cofactor. Detected in retina, more specifically in photoreceptors.

It carries out the reaction O-phospho-L-seryl-[protein] + H2O = L-seryl-[protein] + phosphate. The enzyme catalyses O-phospho-L-threonyl-[protein] + H2O = L-threonyl-[protein] + phosphate. With respect to regulation, activated by calcium. Its function is as follows. May play a role in phototransduction. May dephosphorylate photoactivated rhodopsin. May function as a calcium sensing regulator of ionic currents, energy production or synaptic transmission. This is Serine/threonine-protein phosphatase with EF-hands 2 (Ppef2) from Mus musculus (Mouse).